The following is a 769-amino-acid chain: Serine protease HtrA-like (769 aa).

Over residues 1-20 the composition is skewed to basic residues; it reads MDIGKKHVIPKSQYRRKRRE. Residues 1 to 390 form a disordered region; sequence MDIGKKHVIP…ATSKLNKGRA (390 aa). Basic and acidic residues-rich tracts occupy residues 21–64 and 71–108; these read FFHN…ERFK and LEQRNRDVNENKAEESKSNQDSKSAYNRDHYLTDDVSK. Over residues 126–137 the composition is skewed to polar residues; it reads YEQNSEATLSTK. The span at 138–186 shows a compositional bias: basic and acidic residues; the sequence is STDKVESSDMRKLSPDKNKVGHEEQHVLSKPSEHDKETRIDFESSRTDS. 2 stretches are compositionally biased toward polar residues: residues 202 to 221 and 247 to 262; these read GNESSNLKSEVISDKSNTVP and QQSQNEQTKTYTYGDS. Residues 264–295 show a composition bias toward basic and acidic residues; it reads QNDKSNHENDLSHHTPSKSDDKDNVMREDHIV. Residues 298–308 show a composition bias toward polar residues; sequence NPDNDINTPSL. The span at 310-330 shows a compositional bias: basic and acidic residues; it reads KIDDDRKLDEKIHVEDKHKQN. The span at 331 to 347 shows a compositional bias: polar residues; the sequence is ADSSETVGYQSQSSVSH. Over residues 348–362 the composition is skewed to basic and acidic residues; it reads RSTEKRNMAINDHHK. The span at 366–390 shows a compositional bias: polar residues; sequence QKLNTKTSANNNQKKATSKLNKGRA. Residues 410-430 traverse the membrane as a helical segment; the sequence is LVILMGIIILIVILNAIFNNV. Catalysis depends on charge relay system residues histidine 504, aspartate 534, and serine 619. In terms of domain architecture, PDZ spans 680-733; the sequence is IASLNSFERQAVKLPGKVKNGVVVDQVDNNGLADQSSLKKGDVITELDGKLLED.

The protein belongs to the peptidase S1C family.

The protein resides in the cell membrane. The polypeptide is Serine protease HtrA-like (Staphylococcus aureus (strain bovine RF122 / ET3-1)).